The primary structure comprises 357 residues: MYRILVINPGSSSTKVAVFEDEKKIAEKNVSHSVEELKKFKRSMDQEPLRRKAVEDFIDEVGYRIEDFSAIAARGGVLEPVPGGTYVVNEYMVDYLINRSPVDHVSNLAAVIGYKLGKPHGIPCFVVDPVSVDEMCDEARFSGIPEIERKSYSHALNIKAVLRKVSREMGKTPEEVKIVVAHLGSGISVCACKNGKIIDVNNANDEGPFSIERTGELPVGDVVKTAYSSKHSAAELKEEFTRKGGLLAYLGTKNLKKALDSMETSRKAKLVVEAMAYQIAKEIGGMCAVLGEKPDAIVITGGMAHEIRFVRMITDYIEKFGKVEVIPGELEMEALALGVLRVLRGEEKAMDYRSVVE.

This sequence belongs to the acetokinase family.

It localises to the cytoplasm. It catalyses the reaction butanoate + ATP = butanoyl phosphate + ADP. This Thermotoga maritima (strain ATCC 43589 / DSM 3109 / JCM 10099 / NBRC 100826 / MSB8) protein is Probable butyrate kinase 1.